The chain runs to 350 residues: Methionine aminopeptidase 1D, chloroplastic/mitochondrial (350 aa).

The transit peptide at 1–49 (MAGVKSLQPRLISSFLGNNSIRSTQPLIHLFRFDLGRRHVSMQLSRTFS) directs the protein to the chloroplast and mitochondrion. Residue G50 is modified to N-acetylglycine. Residues 71–90 (RLRPGNVSPRRPVPGHITKP) are disordered. H180 contributes to the substrate binding site. A divalent metal cation contacts are provided by D197, D208, and H271. Position 278 (H278) interacts with substrate. A divalent metal cation-binding residues include E303 and E334.

It belongs to the peptidase M24A family. Methionine aminopeptidase type 1 subfamily. The cofactor is Co(2+). Requires Zn(2+) as cofactor. Mn(2+) is required as a cofactor. Fe(2+) serves as cofactor. In terms of tissue distribution, ubiquitous. Preferentially expressed in green tissues.

It localises to the plastid. It is found in the chloroplast. The protein localises to the mitochondrion. The catalysed reaction is Release of N-terminal amino acids, preferentially methionine, from peptides and arylamides.. Removes the N-terminal methionine from nascent proteins. The N-terminal methionine is often cleaved when the second residue in the primary sequence is small and uncharged (Met-Ala-, Cys, Gly, Pro, Ser, Thr, or Val). The protein is Methionine aminopeptidase 1D, chloroplastic/mitochondrial (MAP1D) of Arabidopsis thaliana (Mouse-ear cress).